A 380-amino-acid polypeptide reads, in one-letter code: Alcohol dehydrogenase (380 aa).

Positions 48, 50, 70, 100, 103, 106, 114, and 178 each coordinate Zn(2+). 2 residues coordinate an alcohol: T50 and H70. Position 50 (T50) interacts with NAD(+). NAD(+) contacts are provided by residues 203 to 208 (GLGAVG), D227, R232, T273, V296, 296 to 298 (VGV), F323, and R373.

It belongs to the zinc-containing alcohol dehydrogenase family. Homodimer. Requires Zn(2+) as cofactor.

Its subcellular location is the cytoplasm. It catalyses the reaction a primary alcohol + NAD(+) = an aldehyde + NADH + H(+). It carries out the reaction a secondary alcohol + NAD(+) = a ketone + NADH + H(+). The protein is Alcohol dehydrogenase (ADH) of Malus domestica (Apple).